Reading from the N-terminus, the 654-residue chain is NADH-ubiquinone oxidoreductase chain 5 (654 aa).

The next 16 helical transmembrane spans lie at Met-1–Arg-21, Leu-30–Val-50, Phe-76–Val-96, Phe-113–Tyr-133, Val-135–Phe-155, Phe-178–Phe-198, Leu-200–Ala-220, Thr-241–Leu-261, Leu-274–Leu-294, Val-301–Ser-320, Val-324–Val-346, Leu-365–Phe-385, Ser-406–Ile-426, Pro-451–Val-471, Phe-510–Phe-530, and Thr-612–Gly-632.

This sequence belongs to the complex I subunit 5 family.

It localises to the mitochondrion inner membrane. It catalyses the reaction a ubiquinone + NADH + 5 H(+)(in) = a ubiquinol + NAD(+) + 4 H(+)(out). Its function is as follows. Core subunit of the mitochondrial membrane respiratory chain NADH dehydrogenase (Complex I) that is believed to belong to the minimal assembly required for catalysis. Complex I functions in the transfer of electrons from NADH to the respiratory chain. The immediate electron acceptor for the enzyme is believed to be ubiquinone. The sequence is that of NADH-ubiquinone oxidoreductase chain 5 (ND5) from Rhizopus stolonifer (Rhizopus nigricans).